Reading from the N-terminus, the 414-residue chain is 2,3-diketo-5-methylthiopentyl-1-phosphate enolase (414 aa).

Lys-99 serves as the catalytic Proton acceptor. Residues Lys-148, 174 to 177 (KDDE), His-265, Gly-338, and 360 to 361 (GG) contribute to the substrate site. Lys-174, Asp-176, and Glu-177 together coordinate Mg(2+). Lys-174 carries the post-translational modification N6-carboxylysine.

The protein belongs to the RuBisCO large chain family. Type IV subfamily. As to quaternary structure, homodimer. Requires Mg(2+) as cofactor.

The catalysed reaction is 5-methylsulfanyl-2,3-dioxopentyl phosphate = 2-hydroxy-5-methylsulfanyl-3-oxopent-1-enyl phosphate. The protein operates within amino-acid biosynthesis; L-methionine biosynthesis via salvage pathway; L-methionine from S-methyl-5-thio-alpha-D-ribose 1-phosphate: step 3/6. Functionally, catalyzes the enolization of 2,3-diketo-5-methylthiopentyl-1-phosphate (DK-MTP-1-P) into 2-hydroxy-3-keto-5-methylthiopentenyl-1-phosphate (HK-MTPenyl-1-P). The chain is 2,3-diketo-5-methylthiopentyl-1-phosphate enolase from Bacillus cereus (strain ATCC 14579 / DSM 31 / CCUG 7414 / JCM 2152 / NBRC 15305 / NCIMB 9373 / NCTC 2599 / NRRL B-3711).